A 221-amino-acid chain; its full sequence is Thiamine-phosphate synthase (221 aa).

Residues 44-48 and Asn-80 each bind 4-amino-2-methyl-5-(diphosphooxymethyl)pyrimidine; that span reads QLRLK. Mg(2+) contacts are provided by Asp-81 and Asp-100. Thr-119 serves as a coordination point for 4-amino-2-methyl-5-(diphosphooxymethyl)pyrimidine. A 2-[(2R,5Z)-2-carboxy-4-methylthiazol-5(2H)-ylidene]ethyl phosphate-binding site is contributed by 146–148; the sequence is TTT. Position 149 (Lys-149) interacts with 4-amino-2-methyl-5-(diphosphooxymethyl)pyrimidine. A 2-[(2R,5Z)-2-carboxy-4-methylthiazol-5(2H)-ylidene]ethyl phosphate-binding site is contributed by Gly-176.

The protein belongs to the thiamine-phosphate synthase family. The cofactor is Mg(2+).

It carries out the reaction 2-[(2R,5Z)-2-carboxy-4-methylthiazol-5(2H)-ylidene]ethyl phosphate + 4-amino-2-methyl-5-(diphosphooxymethyl)pyrimidine + 2 H(+) = thiamine phosphate + CO2 + diphosphate. It catalyses the reaction 2-(2-carboxy-4-methylthiazol-5-yl)ethyl phosphate + 4-amino-2-methyl-5-(diphosphooxymethyl)pyrimidine + 2 H(+) = thiamine phosphate + CO2 + diphosphate. The enzyme catalyses 4-methyl-5-(2-phosphooxyethyl)-thiazole + 4-amino-2-methyl-5-(diphosphooxymethyl)pyrimidine + H(+) = thiamine phosphate + diphosphate. It functions in the pathway cofactor biosynthesis; thiamine diphosphate biosynthesis; thiamine phosphate from 4-amino-2-methyl-5-diphosphomethylpyrimidine and 4-methyl-5-(2-phosphoethyl)-thiazole: step 1/1. In terms of biological role, condenses 4-methyl-5-(beta-hydroxyethyl)thiazole monophosphate (THZ-P) and 2-methyl-4-amino-5-hydroxymethyl pyrimidine pyrophosphate (HMP-PP) to form thiamine monophosphate (TMP). The chain is Thiamine-phosphate synthase from Hyphomonas neptunium (strain ATCC 15444).